Reading from the N-terminus, the 44-residue chain is Tachystatin-A1 (44 aa).

Disulfide bonds link Cys-4/Cys-24, Cys-11/Cys-29, and Cys-23/Cys-41.

As to expression, granular hemocytes, small secretory granules.

It localises to the secreted. Exhibits stronger antimicrobial activity against the Gram-positive bacteria (S.aureus (IC(50) is 4.2 ug/ml)) and fungi (C.albicans (IC(50) is 3.0 ug/ml) and P.pastoris (IC(50) is 0.5 ug/ml)) than Gram-negative bacteria (E.coli (IC(50) is 25 ug/ml)). Binds to chitin (8.4 uM are required to obtain 50% of binding). Does not cause hemolysis on sheep erythrocytes. Has no blocking activity on the P-type calcium channel. The chain is Tachystatin-A1 from Tachypleus tridentatus (Japanese horseshoe crab).